Consider the following 414-residue polypeptide: uncharacterized protein (414 aa).

The Lumenal segment spans residues 1-66 (MNPSVPKVMK…LQRISKDYLK (66 aa)). The tract at residues 20–51 (SKEMNDTSLQLPSTTRSLSPKESNSNEDFNVD) is disordered. The segment covering 25–51 (DTSLQLPSTTRSLSPKESNSNEDFNVD) has biased composition (polar residues). Residue Lys-40 forms a Glycyl lysine isopeptide (Lys-Gly) (interchain with G-Cter in ubiquitin) linkage. The helical transmembrane segment at 67 to 87 (PNIGLVLLTVSYFFNSAMVVS) threads the bilayer. The 138-residue stretch at 78 to 215 (YFFNSAMVVS…SLLGVVLIVR (138 aa)) folds into the EamA 1 domain. Residues 88-106 (TKVLENDPDDIANDRQIKP) are Cytoplasmic-facing. A helical membrane pass occupies residues 107-127 (LQILLVRMVITYIGTLIYMYI). At 128-144 (NKSTISDVPFGKPEVRK) the chain is on the lumenal side. A helical transmembrane segment spans residues 145-167 (WLVLRGCTGFFGVFGMYYSLMYL). The Cytoplasmic portion of the chain corresponds to 168–171 (TISD). The helical transmembrane segment at 172–191 (AVLITFLAPSLTIFLSWVIL) threads the bilayer. Residues 192–199 (RERFTKVE) lie on the Lumenal side of the membrane. A helical membrane pass occupies residues 200–220 (ALGSLISLLGVVLIVRPSFLF). Over 221-241 (GTPELTDSSSQIVESSDPKSR) the chain is Cytoplasmic. The helical transmembrane segment at 242–262 (LIATLVGLWGVLGMSCVYIII) threads the bilayer. The 127-residue stretch at 253 to 379 (LGMSCVYIII…IISATLWVIR (127 aa)) folds into the EamA 2 domain. At 263–269 (RYIGKRA) the chain is on the lumenal side. The helical transmembrane segment at 270-290 (HAIMSVSYFSLITAIVSFIGI) threads the bilayer. At 291–307 (NTIPSMKFQIPHSKKQW) the chain is on the cytoplasmic side. A helical membrane pass occupies residues 308 to 328 (ILFGNLGVSGFIFQLLLTMGI). The Lumenal portion of the chain corresponds to 329-357 (QRERAGRGSLMTYTQLLYAVFWDVALYKH). Residues 358-378 (WPNIWSWIGMIIIISATLWVI) form a helical membrane-spanning segment. Residues 379–414 (RIRAANNETTAKDLTPIIDDEENSIPLTEFDLSDSK) lie on the Cytoplasmic side of the membrane.

This sequence to yeast YPL264c.

The protein localises to the membrane. This is an uncharacterized protein from Saccharomyces cerevisiae (strain ATCC 204508 / S288c) (Baker's yeast).